Consider the following 333-residue polypeptide: tRNA N6-adenosine threonylcarbamoyltransferase (333 aa).

Histidine 111 and histidine 115 together coordinate Fe cation. Residues 134-138 (LVSGG), aspartate 167, glycine 180, and asparagine 272 each bind substrate. Residue aspartate 300 coordinates Fe cation.

This sequence belongs to the KAE1 / TsaD family. It depends on Fe(2+) as a cofactor.

It localises to the cytoplasm. The catalysed reaction is L-threonylcarbamoyladenylate + adenosine(37) in tRNA = N(6)-L-threonylcarbamoyladenosine(37) in tRNA + AMP + H(+). Functionally, required for the formation of a threonylcarbamoyl group on adenosine at position 37 (t(6)A37) in tRNAs that read codons beginning with adenine. Is involved in the transfer of the threonylcarbamoyl moiety of threonylcarbamoyl-AMP (TC-AMP) to the N6 group of A37, together with TsaE and TsaB. TsaD likely plays a direct catalytic role in this reaction. The protein is tRNA N6-adenosine threonylcarbamoyltransferase of Legionella pneumophila subsp. pneumophila (strain Philadelphia 1 / ATCC 33152 / DSM 7513).